The primary structure comprises 326 residues: Vitamin B12 import system permease protein BtuC (326 aa).

9 helical membrane passes run 15–35, 61–81, 88–108, 112–132, 146–166, 184–204, 240–260, 274–294, and 302–322; these read WLLC…CAGE, LAVL…QALF, PGLL…VLLG, LPNW…TLIL, LLAG…AIYF, GGVD…LLWI, GWMV…GLVI, VLLP…DVVA, and ELPI…WLLL.

This sequence belongs to the binding-protein-dependent transport system permease family. FecCD subfamily. In terms of assembly, the complex is composed of two ATP-binding proteins (BtuD), two transmembrane proteins (BtuC) and a solute-binding protein (BtuF).

Its subcellular location is the cell inner membrane. Part of the ABC transporter complex BtuCDF involved in vitamin B12 import. Involved in the translocation of the substrate across the membrane. This is Vitamin B12 import system permease protein BtuC from Escherichia coli O8 (strain IAI1).